Consider the following 346-residue polypeptide: Methionine import ATP-binding protein MetN 1 (346 aa).

Positions 2–241 (IELKNVSKVF…PQHVTTKKFV (240 aa)) constitute an ABC transporter domain. 38–45 (GYSGAGKS) contacts ATP.

It belongs to the ABC transporter superfamily. Methionine importer (TC 3.A.1.24) family. In terms of assembly, the complex is composed of two ATP-binding proteins (MetN), two transmembrane proteins (MetI) and a solute-binding protein (MetQ).

It is found in the cell membrane. It catalyses the reaction L-methionine(out) + ATP + H2O = L-methionine(in) + ADP + phosphate + H(+). The enzyme catalyses D-methionine(out) + ATP + H2O = D-methionine(in) + ADP + phosphate + H(+). Its function is as follows. Part of the ABC transporter complex MetNIQ involved in methionine import. Responsible for energy coupling to the transport system. In Bacillus anthracis, this protein is Methionine import ATP-binding protein MetN 1.